Reading from the N-terminus, the 294-residue chain is Probable enoyl-CoA hydratase 2 (294 aa).

Residues 84 to 85, Lys113, 190 to 195, Gly213, and Phe243 contribute to the (3R)-3-hydroxydecanoyl-CoA site; these read HG and DLNPLH. A MaoC-like domain is found at 165–269; that stretch reads DRAPDAISKQ…INPTTILFQS (105 aa). The Microbody targeting signal motif lies at 292-294; that stretch reads GSL.

Belongs to the short-chain dehydrogenases/reductases (SDR) family.

It localises to the peroxisome. It catalyses the reaction a (3R)-3-hydroxyacyl-CoA = a (2E)-enoyl-CoA + H2O. The sequence is that of Probable enoyl-CoA hydratase 2 (mfeB) from Dictyostelium discoideum (Social amoeba).